The primary structure comprises 194 residues: CMRF35-like molecule 5 (194 aa).

Residues 1-18 (MWLSPSLLLLILPGYSIA) form the signal peptide. In terms of domain architecture, Ig-like V-type spans 19–125 (AKITGPTTVN…LGVKVQVTIN (107 aa)). The Extracellular portion of the chain corresponds to 19 to 165 (AKITGPTTVN…LTRSPLKSTH (147 aa)). N-linked (GlcNAc...) asparagine glycosylation occurs at asparagine 28. A disulfide bridge connects residues cysteine 39 and cysteine 107. Residues 166-186 (FLFLFLLELPLLLSMLGTVLW) form a helical membrane-spanning segment. The Cytoplasmic portion of the chain corresponds to 187–194 (VNRPQRRS).

It belongs to the CD300 family. Forms complexes with the CD300 family members with exception of CD300c. N-glycosylated. In terms of tissue distribution, expression seems restricted to cells of myeloid lineage.

The protein localises to the cell membrane. This is CMRF35-like molecule 5 (CD300LD) from Homo sapiens (Human).